Reading from the N-terminus, the 437-residue chain is Diaminopimelate decarboxylase (437 aa).

Lys-81 is subject to N6-(pyridoxal phosphate)lysine. Pyridoxal 5'-phosphate contacts are provided by residues Gly-256 and 298–301 (EPGR). Substrate-binding residues include Arg-301, Arg-337, and Tyr-341. The Proton donor role is filled by Cys-366. Glu-367 and Tyr-396 together coordinate substrate. Tyr-396 contacts pyridoxal 5'-phosphate.

This sequence belongs to the Orn/Lys/Arg decarboxylase class-II family. LysA subfamily. As to quaternary structure, homodimer. It depends on pyridoxal 5'-phosphate as a cofactor.

It catalyses the reaction meso-2,6-diaminopimelate + H(+) = L-lysine + CO2. It participates in amino-acid biosynthesis; L-lysine biosynthesis via DAP pathway; L-lysine from DL-2,6-diaminopimelate: step 1/1. In terms of biological role, specifically catalyzes the decarboxylation of meso-diaminopimelate (meso-DAP) to L-lysine. The chain is Diaminopimelate decarboxylase from Actinosynnema pretiosum subsp. auranticum.